The chain runs to 111 residues: Probable 4-amino-4-deoxy-L-arabinose-phosphoundecaprenol flippase subunit ArnE (111 aa).

Over 1–37 the chain is Cytoplasmic; it reads MIWLTLVFASLLSVAGQLCQKQATCFVAINKRRKHIA. The helical transmembrane segment at 38–58 threads the bilayer; it reads LWLGLALACLGLAMVLWLLVL. The EamA domain maps to 40–109; the sequence is LGLALACLGL…IIGGIVILGS (70 aa). At 59-60 the chain is on the periplasmic side; it reads QN. A helical transmembrane segment spans residues 61–81; the sequence is VPVGIAYPMLSLNFVWVTLAA. The Cytoplasmic segment spans residues 82-87; the sequence is VKLWHE. The helical transmembrane segment at 88–108 threads the bilayer; sequence PVSPRHWCGVAFIIGGIVILG. Over 109–111 the chain is Periplasmic; sequence STV.

This sequence belongs to the ArnE family. In terms of assembly, heterodimer of ArnE and ArnF.

The protein resides in the cell inner membrane. The protein operates within bacterial outer membrane biogenesis; lipopolysaccharide biosynthesis. Its function is as follows. Translocates 4-amino-4-deoxy-L-arabinose-phosphoundecaprenol (alpha-L-Ara4N-phosphoundecaprenol) from the cytoplasmic to the periplasmic side of the inner membrane. This is Probable 4-amino-4-deoxy-L-arabinose-phosphoundecaprenol flippase subunit ArnE from Escherichia coli (strain 55989 / EAEC).